The chain runs to 722 residues: Catalase B (722 aa).

Residues 1–15 (MRALGLVGLVGVANA) form the signal peptide. Active-site residues include His100 and Asn173. Tyr388 is a heme binding site.

The protein belongs to the catalase family. Requires heme as cofactor.

The protein resides in the secreted. The enzyme catalyses 2 H2O2 = O2 + 2 H2O. In terms of biological role, occurs in almost all aerobically respiring organisms and serves to protect cells from the toxic effects of hydrogen peroxide. The protein is Catalase B (catB) of Emericella nidulans (strain FGSC A4 / ATCC 38163 / CBS 112.46 / NRRL 194 / M139) (Aspergillus nidulans).